The chain runs to 370 residues: Immunoglobulin superfamily member 5 (370 aa).

Residues 1-24 (MEGSWRDVLAVLVILAQLTASGSS) form the signal peptide. Ig-like V-type domains are found at residues 25–125 (YQII…LSVQ) and 128–215 (GTLN…KSLT). At 25–239 (YQIIEGPQNV…EEGPALPTWA (215 aa)) the chain is on the extracellular side. N-linked (GlcNAc...) asparagine glycans are attached at residues Asn33 and Asn45. Cys46 and Cys109 form a disulfide bridge. N-linked (GlcNAc...) asparagine glycans are attached at residues Asn146, Asn196, and Asn217. Cys149 and Cys201 form a disulfide bridge. The helical transmembrane segment at 240–260 (IILLAVAFSLLLILIIVLIII) threads the bilayer. Over 261-370 (FCCCCASRRE…PQKVRNVTLV (110 aa)) the chain is Cytoplasmic. The tract at residues 284 to 359 (ANMRTNKADP…THPRVSFDIA (76 aa)) is disordered. Residues 289–301 (NKADPETKLKGGK) show a composition bias toward basic and acidic residues.

The protein belongs to the immunoglobulin superfamily. Interacts with MAGI1 at tight junctions, forms a tripartite complex with NPHS1. Interacts with LNX1 isoform 2 via its PDZ 2 domain, it may also interact with other isoforms containing this domain. Post-translationally, N-glycosylated. Localized to kidney glomeruli and small intestinal epithelial cells. In kidney glomeruli, it is localized at slit diaphragm. Also found in spermatogonia, gonocytes, hematopoietic stem cells and Sertoli cells.

It is found in the apical cell membrane. Its subcellular location is the cell junction. The protein resides in the tight junction. Its function is as follows. Provides, together with MAGI1, an adhesion machinery at tight junctions, which may regulate the permeability of kidney glomerulus and small intestinal epithelial cells. Mediates calcium-independent homophilic cell adhesion. In testis, it may function as a cell adhesion molecule rather than a tight-junction protein. It may participate in the adhesion between spermatogonia-spermatogonia, spermatogonia-Sertoli cells, and Sertoli cells-Sertoli cells. The protein is Immunoglobulin superfamily member 5 (Igsf5) of Mus musculus (Mouse).